The sequence spans 148 residues: Large ribosomal subunit protein uL13 (148 aa).

Basic and acidic residues-rich tracts occupy residues 71 to 81 and 89 to 99; these read GKKEKQKEYHE and DHSHSPEEMRA. 2 disordered regions span residues 71 to 99 and 125 to 148; these read GKKEKQKEYHEYSGYPGGDHSHSPEEMRA and KKLKVYAGPDHPHEAQQPEPLDNA.

The protein belongs to the universal ribosomal protein uL13 family. As to quaternary structure, part of the 50S ribosomal subunit.

Its function is as follows. This protein is one of the early assembly proteins of the 50S ribosomal subunit, although it is not seen to bind rRNA by itself. It is important during the early stages of 50S assembly. This Salinibacter ruber (strain DSM 13855 / M31) protein is Large ribosomal subunit protein uL13.